A 514-amino-acid polypeptide reads, in one-letter code: RNA polymerase sigma factor SigA (514 aa).

Residues Ala135–Ser159 show a composition bias toward basic residues. A disordered region spans residues Ala135–Ala205. Positions Leu281–Thr351 are sigma-70 factor domain-2. Positions Asp305–Gln308 match the Interaction with polymerase core subunit RpoC motif. Residues Glu360–Ala436 are sigma-70 factor domain-3. Residues Val449–His502 are sigma-70 factor domain-4. Positions Leu475–Ser494 form a DNA-binding region, H-T-H motif.

The protein belongs to the sigma-70 factor family. RpoD/SigA subfamily. In terms of assembly, interacts transiently with the RNA polymerase catalytic core.

It localises to the cytoplasm. Its function is as follows. Sigma factors are initiation factors that promote the attachment of RNA polymerase to specific initiation sites and are then released. This sigma factor is the primary sigma factor during exponential growth. The polypeptide is RNA polymerase sigma factor SigA (Streptomyces griseus).